A 33-amino-acid chain; its full sequence is Gastrin (33 aa).

Gln1 is subject to Pyrrolidone carboxylic acid. Phenylalanine amide is present on Phe33.

This sequence belongs to the gastrin/cholecystokinin family.

The protein localises to the secreted. Functionally, gastrin stimulates the stomach mucosa to produce and secrete hydrochloric acid and the pancreas to secrete its digestive enzymes. It also stimulates smooth muscle contraction and increases blood circulation and water secretion in the stomach and intestine. This Cavia porcellus (Guinea pig) protein is Gastrin (GAST).